The primary structure comprises 1519 residues: DNA (cytosine-5)-methyltransferase 4 (1519 aa).

A compositionally biased stretch (basic and acidic residues) spans 1 to 24; sequence MEMETKAGKQKKRSVDSDDDVSKE. The disordered stretch occupies residues 1-31; it reads MEMETKAGKQKKRSVDSDDDVSKERRPKRAA. A Glycyl lysine isopeptide (Lys-Gly) (interchain with G-Cter in ubiquitin) cross-link involves residue Lys-583. The interval 641-668 is disordered; sequence ENVEEEELEEVEEEDENEEDDPEENELE. Acidic residues predominate over residues 642-668; that stretch reads NVEEEELEEVEEEDENEEDDPEENELE. BAH domains lie at 715–849 and 916–1033; these read DVVV…FSLP and TTLK…KQFP. Positions 1078 to 1512 constitute an SAM-dependent MTase C5-type domain; sequence LATLDIFAGC…RKLKEALYLK (435 aa). Residue Cys-1183 is part of the active site.

The protein belongs to the class I-like SAM-binding methyltransferase superfamily. C5-methyltransferase family. As to expression, expressed at low levels in vegetative and floral organs.

The protein resides in the nucleus. It catalyses the reaction a 2'-deoxycytidine in DNA + S-adenosyl-L-methionine = a 5-methyl-2'-deoxycytidine in DNA + S-adenosyl-L-homocysteine + H(+). Functionally, maintains chromatin CpG methylation that plays a role in genomic imprinting, regulation of embryogenesis and seed viability. Required for proper patterns of CG DNA methylation in dividing cells. The polypeptide is DNA (cytosine-5)-methyltransferase 4 (MET4) (Arabidopsis thaliana (Mouse-ear cress)).